The following is an 87-amino-acid chain: Small ribosomal subunit protein bS20 (87 aa).

The interval 1–27 is disordered; sequence MANIKSAKKRALQSEKRRQHNASRRSM.

It belongs to the bacterial ribosomal protein bS20 family.

Its function is as follows. Binds directly to 16S ribosomal RNA. The chain is Small ribosomal subunit protein bS20 from Aeromonas hydrophila subsp. hydrophila (strain ATCC 7966 / DSM 30187 / BCRC 13018 / CCUG 14551 / JCM 1027 / KCTC 2358 / NCIMB 9240 / NCTC 8049).